The sequence spans 77 residues: Protein RALF-like 17 (77 aa).

The first 29 residues, 1–29 (MAASREFIICCFLTLLLCNFFMRVESGAA), serve as a signal peptide directing secretion. C37 and C51 are oxidised to a cystine.

The protein belongs to the plant rapid alkalinization factor (RALF) family.

The protein localises to the secreted. Its function is as follows. Cell signaling peptide that may regulate plant stress, growth, and development. Mediates a rapid alkalinization of extracellular space by mediating a transient increase in the cytoplasmic Ca(2+) concentration leading to a calcium-dependent signaling events through a cell surface receptor and a concomitant activation of some intracellular mitogen-activated protein kinases. This chain is Protein RALF-like 17 (RALFL17), found in Arabidopsis thaliana (Mouse-ear cress).